The chain runs to 517 residues: Cytochrome P450 monooxygenase ausI (517 aa).

A helical membrane pass occupies residues 8-28 (LAPLGQPWIAGLVVVSAVLYL). A heme-binding site is contributed by Cys-457.

This sequence belongs to the cytochrome P450 family. It depends on heme as a cofactor.

It is found in the membrane. It functions in the pathway secondary metabolite biosynthesis; terpenoid biosynthesis. Cytochrome P450 monooxygenase; part of the gene cluster that mediates the biosynthesis of calidodehydroaustin, a fungal meroterpenoid. The first step of the pathway is the synthesis of 3,5-dimethylorsellinic acid by the polyketide synthase ausA. 3,5-dimethylorsellinic acid is then prenylated by the polyprenyl transferase ausN. Further epoxidation by the FAD-dependent monooxygenase ausM and cyclization by the probable terpene cyclase ausL lead to the formation of protoaustinoid A. Protoaustinoid A is then oxidized to spiro-lactone preaustinoid A3 by the combined action of the FAD-binding monooxygenases ausB and ausC, and the dioxygenase ausE. Acid-catalyzed keto-rearrangement and ring contraction of the tetraketide portion of preaustinoid A3 by ausJ lead to the formation of preaustinoid A4. The aldo-keto reductase ausK, with the help of ausH, is involved in the next step by transforming preaustinoid A4 into isoaustinone which is in turn hydroxylated by the P450 monooxygenase ausI to form austinolide. The cytochrome P450 monooxygenase ausG modifies austinolide to austinol. Austinol is further acetylated to austin by the O-acetyltransferase ausP, which spontaneously changes to dehydroaustin. The cytochrome P450 monooxygenase ausR then converts dehydroaustin is into 7-dehydrodehydroaustin. The hydroxylation catalyzed by ausR permits the O-acetyltransferase ausQ to add an additional acetyl group to the molecule, leading to the formation of acetoxydehydroaustin. The short chain dehydrogenase ausT catalyzes the reduction of the double bond present between carbon atoms 1 and 2 to convert 7-dehydrodehydroaustin into 1,2-dihydro-7-hydroxydehydroaustin. AusQ catalyzes not only an acetylation reaction but also the addition of the PKS ausV diketide product to 1,2-dihydro-7-hydroxydehydroaustin, forming precalidodehydroaustin. Finally, the iron/alpha-ketoglutarate-dependent dioxygenase converts precalidodehydroaustin into calidodehydroaustin. The protein is Cytochrome P450 monooxygenase ausI of Aspergillus calidoustus.